The chain runs to 138 residues: Histone H2A.Z (138 aa).

Residues 1 to 10 show a composition bias toward gly residues; it reads MSSKVGGGKG. The disordered stretch occupies residues 1 to 21; the sequence is MSSKVGGGKGGKSKTSSEAKV. Lys4 and Lys9 each carry N6-acetyllysine.

It belongs to the histone H2A family. In terms of assembly, the nucleosome is a histone octamer containing two molecules each of H2A, H2B, H3 and H4 assembled in one H3-H4 heterotetramer and two H2A-H2B heterodimers. The octamer wraps approximately 147 bp of DNA. H2A or its variant H2A.Z forms a heterodimer with H2B. H2A.Z associates with the VPS72/SWC2 subunit of the SWR1 chromatin remodeling complex. Also interacts with RBP1/DNA-directed RNA polymerase II largest subunit. In terms of processing, acetylated once deposited into chromatin.

Its subcellular location is the nucleus. The protein resides in the chromosome. Variant histone H2A which can replace H2A in some nucleosomes. Nucleosomes wrap and compact DNA into chromatin, limiting DNA accessibility to the cellular machineries which require DNA as a template. Histones thereby play a central role in transcription regulation, DNA repair, DNA replication and chromosomal stability. DNA accessibility is regulated via a complex set of post-translational modifications of histones, also called histone code, and nucleosome remodeling. This variant is enriched at promoters, it may keep them in a repressed state until the appropriate activation signal is received. Near telomeres, it may counteract gene silencing caused by the spread of heterochromatin proteins. Required for the RNA polymerase II and SPT15/TBP recruitment to the target genes. Involved in chromosome stability. The chain is Histone H2A.Z (HTZ1) from Cryptococcus neoformans var. neoformans serotype D (strain B-3501A) (Filobasidiella neoformans).